Reading from the N-terminus, the 343-residue chain is NADH-quinone oxidoreductase subunit H (343 aa).

Transmembrane regions (helical) follow at residues 21–41 (WTLV…LFCV), 95–115 (FILA…VVPF), 124–144 (VNVG…GVLL), 172–192 (MGFT…GDIV), 197–217 (GLWY…SVVA), 257–277 (IIMV…PPIE), 281–301 (FIPG…FFLW), and 317–337 (LGWK…GLAM).

This sequence belongs to the complex I subunit 1 family. NDH-1 is composed of 14 different subunits. Subunits NuoA, H, J, K, L, M, N constitute the membrane sector of the complex.

It localises to the cell inner membrane. It catalyses the reaction a quinone + NADH + 5 H(+)(in) = a quinol + NAD(+) + 4 H(+)(out). Its function is as follows. NDH-1 shuttles electrons from NADH, via FMN and iron-sulfur (Fe-S) centers, to quinones in the respiratory chain. The immediate electron acceptor for the enzyme in this species is believed to be ubiquinone. Couples the redox reaction to proton translocation (for every two electrons transferred, four hydrogen ions are translocated across the cytoplasmic membrane), and thus conserves the redox energy in a proton gradient. This subunit may bind ubiquinone. The protein is NADH-quinone oxidoreductase subunit H of Magnetococcus marinus (strain ATCC BAA-1437 / JCM 17883 / MC-1).